The sequence spans 308 residues: 26S proteasome non-ATPase regulatory subunit 14 homolog (308 aa).

The MPN domain occupies 30 to 165; it reads VYISSLALLK…IDAFRSINPQ (136 aa). Residues H112, H114, and D125 each contribute to the Zn(2+) site. A JAMM motif motif is present at residues 112-125; the sequence is HSHPGFGCWLSGVD. Residue K238 forms a Glycyl lysine isopeptide (Lys-Gly) (interchain with G-Cter in ubiquitin) linkage.

This sequence belongs to the peptidase M67A family. PSMD14 subfamily. As to quaternary structure, component of the 19S regulatory particle (RP/PA700) lid subcomplex of the 26S proteasome. The 26S proteasome is composed of a core protease (CP), known as the 20S proteasome, capped at one or both ends by the 19S regulatory particle (RP/PA700). The RP/PA700 complex is composed of at least 17 different subunits in two subcomplexes, the base and the lid, which form the portions proximal and distal to the 20S proteolytic core, respectively. In terms of tissue distribution, ubiquitous with highest expression in flowers.

In terms of biological role, metalloprotease component of the 26S proteasome that specifically cleaves 'Lys-63'-linked polyubiquitin chains. The 26S proteasome is involved in the ATP-dependent degradation of ubiquitinated proteins. The function of the 'Lys-63'-specific deubiquitination of the proteasome is unclear. The chain is 26S proteasome non-ATPase regulatory subunit 14 homolog (RPN11) from Arabidopsis thaliana (Mouse-ear cress).